The sequence spans 354 residues: UDP-3-O-acylglucosamine N-acyltransferase (354 aa).

H247 functions as the Proton acceptor in the catalytic mechanism.

This sequence belongs to the transferase hexapeptide repeat family. LpxD subfamily. As to quaternary structure, homotrimer.

It carries out the reaction a UDP-3-O-[(3R)-3-hydroxyacyl]-alpha-D-glucosamine + a (3R)-hydroxyacyl-[ACP] = a UDP-2-N,3-O-bis[(3R)-3-hydroxyacyl]-alpha-D-glucosamine + holo-[ACP] + H(+). It participates in bacterial outer membrane biogenesis; LPS lipid A biosynthesis. Functionally, catalyzes the N-acylation of UDP-3-O-acylglucosamine using 3-hydroxyacyl-ACP as the acyl donor. Is involved in the biosynthesis of lipid A, a phosphorylated glycolipid that anchors the lipopolysaccharide to the outer membrane of the cell. This is UDP-3-O-acylglucosamine N-acyltransferase from Chlamydia trachomatis serovar L2 (strain ATCC VR-902B / DSM 19102 / 434/Bu).